We begin with the raw amino-acid sequence, 216 residues long: Somatotropin (216 aa).

The N-terminal stretch at Met-1 to Ala-26 is a signal peptide. A Zn(2+)-binding site is contributed by His-45. Cys-78 and Cys-189 are disulfide-bonded. Ser-131 carries the post-translational modification Phosphoserine. Glu-198 is a Zn(2+) binding site. Cys-206 and Cys-214 are joined by a disulfide.

Belongs to the somatotropin/prolactin family.

The protein resides in the secreted. Functionally, plays an important role in growth control. Its major role in stimulating body growth is to stimulate the liver and other tissues to secrete IGF1. It stimulates both the differentiation and proliferation of myoblasts. It also stimulates amino acid uptake and protein synthesis in muscle and other tissues. This chain is Somatotropin (Gh1), found in Mus musculus (Mouse).